A 71-amino-acid polypeptide reads, in one-letter code: Beta-defensin 124 (71 aa).

The first 22 residues, 1 to 22 (MTQLLLFLVALLVLGHVPSGRS), serve as a signal peptide directing secretion. Cystine bridges form between Cys27–Cys54, Cys34–Cys48, and Cys38–Cys55.

The protein belongs to the beta-defensin family.

It localises to the secreted. Has antibacterial activity. This Homo sapiens (Human) protein is Beta-defensin 124 (DEFB124).